Reading from the N-terminus, the 443-residue chain is Glutamyl-tRNA reductase (443 aa).

Residues 49–52 (TCNR), S109, 114–116 (ETQ), and Q120 contribute to the substrate site. C50 serves as the catalytic Nucleophile. An NADP(+)-binding site is contributed by 189–194 (GAGKMS).

This sequence belongs to the glutamyl-tRNA reductase family. In terms of assembly, homodimer.

It catalyses the reaction (S)-4-amino-5-oxopentanoate + tRNA(Glu) + NADP(+) = L-glutamyl-tRNA(Glu) + NADPH + H(+). Its pathway is porphyrin-containing compound metabolism; protoporphyrin-IX biosynthesis; 5-aminolevulinate from L-glutamyl-tRNA(Glu): step 1/2. Functionally, catalyzes the NADPH-dependent reduction of glutamyl-tRNA(Glu) to glutamate 1-semialdehyde (GSA). The sequence is that of Glutamyl-tRNA reductase from Heliobacterium mobile (Heliobacillus mobilis).